Consider the following 52-residue polypeptide: Lysis protein for colicin N (52 aa).

The N-terminal stretch at 1-17 (MCGKILLILFFIMTLSA) is a signal peptide. The N-palmitoyl cysteine moiety is linked to residue cysteine 18. Cysteine 18 is lipidated: S-diacylglycerol cysteine.

It is found in the cell outer membrane. Lysis proteins are required for both colicin release and partial cell lysis. This is Lysis protein for colicin N (cnl) from Escherichia coli.